The sequence spans 284 residues: Shikimate dehydrogenase (NADP(+)) (284 aa).

Shikimate contacts are provided by residues 20-22 and Ser67; that span reads SIS. The active-site Proton acceptor is the Lys71. Asp83 contacts NADP(+). Positions 92 and 107 each coordinate shikimate. NADP(+) contacts are provided by residues 129–133 and Ile227; that span reads GAGGA. Tyr229 serves as a coordination point for shikimate. Residue Gly250 coordinates NADP(+).

This sequence belongs to the shikimate dehydrogenase family. As to quaternary structure, homodimer.

The catalysed reaction is shikimate + NADP(+) = 3-dehydroshikimate + NADPH + H(+). It functions in the pathway metabolic intermediate biosynthesis; chorismate biosynthesis; chorismate from D-erythrose 4-phosphate and phosphoenolpyruvate: step 4/7. Functionally, involved in the biosynthesis of the chorismate, which leads to the biosynthesis of aromatic amino acids. Catalyzes the reversible NADPH linked reduction of 3-dehydroshikimate (DHSA) to yield shikimate (SA). In Streptococcus pneumoniae serotype 2 (strain D39 / NCTC 7466), this protein is Shikimate dehydrogenase (NADP(+)).